The sequence spans 266 residues: Very-long-chain aldehyde decarbonylase GL1-11 (266 aa).

The next 4 membrane-spanning stretches (helical) occupy residues 25-45, 74-94, 106-126, and 163-183; these read VVTF…SLLF, ILYH…AFKF, WTVI…IFYW, and ILFL…HLFT. Residues 113-248 enclose the Fatty acid hydroxylase domain; sequence VLFYFVLEDF…FVYMDWLFGT (136 aa).

Belongs to the sterol desaturase family. In terms of assembly, homodimer.

The protein localises to the endoplasmic reticulum membrane. It carries out the reaction a long-chain fatty aldehyde + 2 NADPH + O2 + H(+) = a long-chain alkane + formate + 2 NADP(+) + H2O. Aldehyde decarbonylase involved in the conversion of aldehydes to alkanes. Core component of a very-long-chain alkane synthesis complex. The protein is Very-long-chain aldehyde decarbonylase GL1-11 of Oryza sativa subsp. indica (Rice).